Consider the following 300-residue polypeptide: uncharacterized protein (300 aa).

This is an uncharacterized protein from Ictalurid herpesvirus 1 (strain Auburn) (IcHV-1).